The sequence spans 148 residues: Small ribosomal subunit protein uS7m (148 aa).

This sequence belongs to the universal ribosomal protein uS7 family. As to quaternary structure, part of the small ribosomal subunit.

The protein resides in the mitochondrion. In terms of biological role, one of the primary rRNA binding proteins, it binds directly to 18S rRNA where it nucleates assembly of the head domain of the small subunit. The protein is Small ribosomal subunit protein uS7m (RPS7) of Triticum aestivum (Wheat).